A 256-amino-acid polypeptide reads, in one-letter code: HTH-type transcriptional regulator PrtR (256 aa).

Residues 16–69 (LKQAMAMRNLKQETLAEAAGVSQNTIHKLTSGKAQSTRKLIEIAAALGVSPVWL) form the HTH cro/C1-type domain. A DNA-binding region (H-T-H motif) is located at residues 27 to 46 (QETLAEAAGVSQNTIHKLTS).

In terms of biological role, represses the promoter activity of the prtN gene. In Pseudomonas aeruginosa (strain ATCC 15692 / DSM 22644 / CIP 104116 / JCM 14847 / LMG 12228 / 1C / PRS 101 / PAO1), this protein is HTH-type transcriptional regulator PrtR (prtR).